The chain runs to 337 residues: Monoacylglycerol lipase abhd6-A (337 aa).

Topologically, residues Met-1–Pro-19 are extracellular. The chain crosses the membrane as a helical; Signal-anchor for type II membrane protein span at residues Ile-20–Trp-42. The Cytoplasmic segment spans residues Arg-43–Glu-337. The AB hydrolase-1 domain maps to Ser-73–Pro-313. Ser-148 functions as the Nucleophile in the catalytic mechanism. Active-site charge relay system residues include Asp-278 and His-306.

This sequence belongs to the AB hydrolase superfamily.

Its subcellular location is the late endosome membrane. It localises to the lysosome membrane. It is found in the mitochondrion membrane. It carries out the reaction Hydrolyzes glycerol monoesters of long-chain fatty acids.. The catalysed reaction is 1-octanoylglycerol + H2O = octanoate + glycerol + H(+). It catalyses the reaction 1-decanoylglycerol + H2O = decanoate + glycerol + H(+). The enzyme catalyses 1-dodecanoylglycerol + H2O = dodecanoate + glycerol + H(+). It carries out the reaction 1-tetradecanoylglycerol + H2O = tetradecanoate + glycerol + H(+). The catalysed reaction is 2-hexadecanoylglycerol + H2O = glycerol + hexadecanoate + H(+). It catalyses the reaction 2-(9Z-octadecenoyl)-glycerol + H2O = glycerol + (9Z)-octadecenoate + H(+). The enzyme catalyses 1-(9Z-octadecenoyl)-glycerol + H2O = glycerol + (9Z)-octadecenoate + H(+). It carries out the reaction 2-(9Z,12Z-octadecadienoyl)-glycerol + H2O = (9Z,12Z)-octadecadienoate + glycerol + H(+). The catalysed reaction is 2-(5Z,8Z,11Z,14Z-eicosatetraenoyl)-glycerol + H2O = glycerol + (5Z,8Z,11Z,14Z)-eicosatetraenoate + H(+). It catalyses the reaction 1-(5Z,8Z,11Z,14Z-eicosatetraenoyl)-glycerol + H2O = glycerol + (5Z,8Z,11Z,14Z)-eicosatetraenoate + H(+). The enzyme catalyses 1-(9Z,12Z-octadecadienoyl)-glycerol + H2O = (9Z,12Z)-octadecadienoate + glycerol + H(+). It carries out the reaction 3-(9Z-octadecenoyl)-sn-glycero-1-phospho-(3'-(9Z-octadecenoyl)-1'-sn-glycerol) + H2O = 3-(9Z-octadecenoyl)-sn-glycero-1-phospho-(1'-sn-glycerol) + (9Z)-octadecenoate + H(+). The catalysed reaction is (S,S)-2-(9Z-octadecenoyl)-sn-glycero-1-phospho-(2'-(9Z-octadecenoyl)-1'-sn-glycerol) + H2O = (S,S)-2-(9Z-octadecenoyl)-sn-glycero-1-phospho-(1'-sn-glycerol) + (9Z)-octadecenoate + H(+). It catalyses the reaction (R,R)-2-(9Z-octadecenoyl)-sn-glycero-3-phospho-(2'-(9Z-octadecenoyl)-3'-sn-glycerol) + H2O = (R,R)-2-(9Z-octadecenoyl)-sn-glycero-3-phospho-(3'-sn-glycerol) + (9Z)-octadecenoate + H(+). Its function is as follows. Lipase that preferentially hydrolysis medium-chain saturated monoacylglycerols including 2-arachidonoylglycerol. Through 2-arachidonoylglycerol degradation may regulate endocannabinoid signaling pathways. Also has a lysophosphatidyl lipase activity with a preference for lysophosphatidylglycerol among other lysophospholipids. Also able to degrade bis(monoacylglycero)phosphate (BMP) and constitutes the major enzyme for BMP catabolism. BMP, also known as lysobisphosphatidic acid, is enriched in late endosomes and lysosomes and plays a key role in the formation of intraluminal vesicles and in lipid sorting. The chain is Monoacylglycerol lipase abhd6-A (abhd6-a) from Xenopus laevis (African clawed frog).